We begin with the raw amino-acid sequence, 122 residues long: uncharacterized protein (122 aa).

Over 1 to 24 the chain is Cytoplasmic; sequence MKNRKFSNLLLLRLRILCFNKKPA. A helical transmembrane segment spans residues 25–45; it reads FAATSYAFFFRNFSVLIFIMV. The Extracellular portion of the chain corresponds to 46–57; the sequence is PDEKENGAAADN. A helical membrane pass occupies residues 58–78; sequence SFSLLIGRGVVLFLFYCPTAL. At 79-122 the chain is on the cytoplasmic side; sequence KMHGPVPAHWFCDKNIEAIQSDGQIRLLRSGPFPWSHGTCIRGA.

Its subcellular location is the membrane. This is an uncharacterized protein from Saccharomyces cerevisiae (strain ATCC 204508 / S288c) (Baker's yeast).